Reading from the N-terminus, the 201-residue chain is MEAMSFAARSTVLSISKSFPKNNSPTYLTLRPKFSRVRFTTVASQSQGRQQVSENAEDAKKKFSETTDSLKHKTSEATDSASHKANGAARETNDKAKETYNAASGKAGELKDKTQEGAENVREKAMDAGNDAMEKTRNAGERVADGVSNVGQNVKENVMGAGEKVKEFAEDVKDTVMGKSEEVKNQAEHETKKRSTSTNYF.

Residues 41–54 (TVASQSQGRQQVSE) show a composition bias toward polar residues. 2 disordered regions span residues 41–155 (TVAS…QNVK) and 177–201 (MGKSEEVKNQAEHETKKRSTSTNYF). Composition is skewed to basic and acidic residues over residues 57 to 76 (EDAKKKFSETTDSLKHKTSE), 108 to 144 (GELKDKTQEGAENVREKAMDAGNDAMEKTRNAGERVA), and 177 to 193 (MGKSEEVKNQAEHETKK).

The protein belongs to the LEA type 1 family.

This is Desiccation-related protein PCC3-06 from Craterostigma plantagineum (Blue gem).